We begin with the raw amino-acid sequence, 3010 residues long: Probable polyketide synthase 2 (3010 aa).

The Ketosynthase family 3 (KS3) domain occupies 9–432 (SRDVAVIGIG…GSNACLLLSE (424 aa)). Active-site for beta-ketoacyl synthase activity residues include Cys-174, His-313, and His-353. Residues 629 to 662 (GINPSINVGHSFGEISSACCSGMLDLETACFIVY) are acyl/malonyl transferase. Ser-639 (for acyl/malonyl transferase activity) is an active-site residue. The segment at 944–1063 (ATQLGYRNDV…ARFSVLKHNS (120 aa)) is N-terminal hotdog fold. The PKS/mFAS DH domain maps to 944-1235 (ATQLGYRNDV…YSSISTDIKN (292 aa)). The active-site Proton acceptor; for dehydratase activity is His-976. The C-terminal hotdog fold stretch occupies residues 1080–1235 (NWTTIKRKEF…YSSISTDIKN (156 aa)). The active-site Proton donor; for dehydratase activity is Asp-1146. A Carrier domain is found at 2482–2559 (DNELSIRDDI…QLIQAVIQAV (78 aa)). O-(pantetheine 4'-phosphoryl)serine is present on Ser-2519.

The cofactor is pantetheine 4'-phosphate.

Functionally, probable polyketide synthase. This chain is Probable polyketide synthase 2 (pks2), found in Dictyostelium discoideum (Social amoeba).